A 269-amino-acid polypeptide reads, in one-letter code: 3-methyl-2-oxobutanoate hydroxymethyltransferase (269 aa).

Mg(2+)-binding residues include Asp-43 and Asp-82. 3-methyl-2-oxobutanoate-binding positions include 43 to 44, Asp-82, and Lys-110; that span reads DS. A Mg(2+)-binding site is contributed by Glu-112. Glu-179 functions as the Proton acceptor in the catalytic mechanism.

Belongs to the PanB family. Homodecamer; pentamer of dimers. It depends on Mg(2+) as a cofactor.

The protein resides in the cytoplasm. The catalysed reaction is 3-methyl-2-oxobutanoate + (6R)-5,10-methylene-5,6,7,8-tetrahydrofolate + H2O = 2-dehydropantoate + (6S)-5,6,7,8-tetrahydrofolate. It functions in the pathway cofactor biosynthesis; (R)-pantothenate biosynthesis; (R)-pantoate from 3-methyl-2-oxobutanoate: step 1/2. Functionally, catalyzes the reversible reaction in which hydroxymethyl group from 5,10-methylenetetrahydrofolate is transferred onto alpha-ketoisovalerate to form ketopantoate. The protein is 3-methyl-2-oxobutanoate hydroxymethyltransferase of Acinetobacter baylyi (strain ATCC 33305 / BD413 / ADP1).